A 510-amino-acid polypeptide reads, in one-letter code: Histidine ammonia-lyase (510 aa).

A cross-link (5-imidazolinone (Ala-Gly)) is located at residues 145–147; sequence ASG. 2,3-didehydroalanine (Ser) is present on Ser146.

The protein belongs to the PAL/histidase family. Post-translationally, contains an active site 4-methylidene-imidazol-5-one (MIO), which is formed autocatalytically by cyclization and dehydration of residues Ala-Ser-Gly.

Its subcellular location is the cytoplasm. The enzyme catalyses L-histidine = trans-urocanate + NH4(+). It functions in the pathway amino-acid degradation; L-histidine degradation into L-glutamate; N-formimidoyl-L-glutamate from L-histidine: step 1/3. This is Histidine ammonia-lyase from Stigmatella aurantiaca.